Reading from the N-terminus, the 122-residue chain is Biogenesis of lysosome-related organelles complex 1 subunit CNL1 (122 aa).

The segment covering 1–10 (MQDNSSHSRE) has biased composition (basic and acidic residues). The interval 1–21 (MQDNSSHSRESASAGDDPLGI) is disordered. Residues 63–95 (ENTIDKNIAKFKELLEKCDTLENHYEMLNQLAI) adopt a coiled-coil conformation.

This sequence belongs to the BLOC1S4 family. In terms of assembly, component of the biogenesis of lysosome-related organelles complex-1 (BLOC-1) composed of at least BLI1, BLS1, CNL1, KXD1, SNN1 and VAB2.

It localises to the cytoplasm. Its function is as follows. Component of the biogenesis of lysosome-related organelles complex-1 (BLOC-1), a complex that is involved in endosomal cargo sorting. This Saccharomyces cerevisiae (strain Lalvin QA23) (Baker's yeast) protein is Biogenesis of lysosome-related organelles complex 1 subunit CNL1 (CLN1).